We begin with the raw amino-acid sequence, 139 residues long: Putative pre-16S rRNA nuclease (139 aa).

Belongs to the YqgF nuclease family.

It is found in the cytoplasm. Could be a nuclease involved in processing of the 5'-end of pre-16S rRNA. This Rippkaea orientalis (strain PCC 8801 / RF-1) (Cyanothece sp. (strain PCC 8801)) protein is Putative pre-16S rRNA nuclease.